We begin with the raw amino-acid sequence, 103 residues long: Large ribosomal subunit protein uL24 (103 aa).

Belongs to the universal ribosomal protein uL24 family. Part of the 50S ribosomal subunit.

One of two assembly initiator proteins, it binds directly to the 5'-end of the 23S rRNA, where it nucleates assembly of the 50S subunit. Its function is as follows. One of the proteins that surrounds the polypeptide exit tunnel on the outside of the subunit. This Syntrophomonas wolfei subsp. wolfei (strain DSM 2245B / Goettingen) protein is Large ribosomal subunit protein uL24.